Here is a 543-residue protein sequence, read N- to C-terminus: MASHQSEKEKPQSCTTEVQVSHVTGLKLGLVVTSVTLVVFLMLLDMSIIVTAIPHITAQFHSLGDVGWYGSAYLLSSCALQPLAGKLYTLLTLKYTFLAFLGVFEVGSALCGAARCSTMLIVGRAVAGMGGSGLTNGAITILASAAPKQQQPLLIGIMMGLSQIAIVCGPLLGGAFTQHASWRWCFYINLPVGALAAILLLAIHIPKSVPTSDCTMPAPRAVGVRVILSQLDLLGFVLFAAFAVMISLALEWGGSDYMWDSSVIIGLFCGAGISLVVFGFWERYVGNSMAMIPFSVASRRQVWCSCLFLGFFSGALLTFSYYLPIYFQAVKDVSPTMSGVYMLPGIGGQIVMAIVSGAIIGKTGYYIPWALASGIIVSISAGLVSTFQPHTSIAAWVMYQFMGGFGRGCGMQTPIIAIQHALPPQMSALGISLAMFGQTFGGSLFLTLAKLVFSAGLDAGLREYAPAVSAEAVTAAGATGFRDVVPANLLSQVLLAYCKGIDHTFYLAVGASGATFLFAWGMGQVGLIWWGEERTGFGRDERV.

Helical transmembrane passes span 30 to 50 (LVVTSVTLVVFLMLLDMSIIV), 90 to 110 (LLTLKYTFLAFLGVFEVGSAL), 125 to 145 (AVAGMGGSGLTNGAITILASA), 153 to 173 (LLIGIMMGLSQIAIVCGPLLG), 185 to 205 (CFYINLPVGALAAILLLAIHI), 233 to 253 (LLGFVLFAAFAVMISLALEWG), 261 to 281 (SSVIIGLFCGAGISLVVFGFW), 307 to 327 (LFLGFFSGALLTFSYYLPIYF), 340 to 360 (VYMLPGIGGQIVMAIVSGAII), 364 to 384 (GYYIPWALASGIIVSISAGLV), 394 to 416 (AAWVMYQFMGGFGRGCGMQTPII), 428 to 448 (ALGISLAMFGQTFGGSLFLTL), and 509 to 529 (VGASGATFLFAWGMGQVGLIW).

This sequence belongs to the major facilitator superfamily. TCR/Tet family.

It is found in the membrane. Functionally, efflux pump; part of the gene cluster that mediates the biosynthesis of monakolin K, also known as lovastatin, and which acts as a potent competitive inhibitor of HMG-CoA reductase. The protein is Efflux pump mokI of Monascus pilosus (Red mold).